A 568-amino-acid chain; its full sequence is Probable WRKY transcription factor 34 (568 aa).

Residues 172-236 constitute a DNA-binding region (WRKY 1); sequence ACCAPADDGY…YTGDHIHSKP (65 aa). Residues Cys-203, Cys-208, His-231, and His-233 each coordinate Zn(2+). Disordered regions lie at residues 230–252 and 337–360; these read DHIH…TGQD and KRRK…EPRV. Positions 366 to 431 form a DNA-binding region, WRKY 2; the sequence is SDIDILDDGY…YIGKHTHVVP (66 aa). Zn(2+) contacts are provided by Cys-397, Cys-402, His-426, and His-428.

The protein belongs to the WRKY group I family.

The protein localises to the nucleus. In terms of biological role, transcription factor. Interacts specifically with the W box (5'-(T)TGAC[CT]-3'), a frequently occurring elicitor-responsive cis-acting element. The sequence is that of Probable WRKY transcription factor 34 (WRKY34) from Arabidopsis thaliana (Mouse-ear cress).